The chain runs to 398 residues: Chalcone synthase 1 (398 aa).

Residue 58–65 (KFKRMCDK) coordinates CoA. Cys-167 acts as the Acyl-thioester intermediate in catalysis. Substrate-binding positions include Thr-200 and 219–220 (GD). Position 311 (Ala-311) interacts with CoA.

The protein belongs to the thiolase-like superfamily. Chalcone/stilbene synthases family. In terms of assembly, homodimer.

It catalyses the reaction (E)-4-coumaroyl-CoA + 3 malonyl-CoA + 3 H(+) = 2',4,4',6'-tetrahydroxychalcone + 3 CO2 + 4 CoA. The protein operates within secondary metabolite biosynthesis; flavonoid biosynthesis. Functionally, the primary product of this enzyme is 4,2',4',6'-tetrahydroxychalcone (also termed naringenin-chalcone or chalcone) which can under specific conditions spontaneously isomerize into naringenin. In Oryza sativa subsp. indica (Rice), this protein is Chalcone synthase 1 (CHS1).